Reading from the N-terminus, the 167-residue chain is Large ribosomal subunit protein uL5 (167 aa).

Belongs to the universal ribosomal protein uL5 family. As to quaternary structure, part of the 50S ribosomal subunit; contacts the 5S rRNA and probably tRNA. Forms a bridge to the 30S subunit in the 70S ribosome.

Functionally, this is one of the proteins that bind and probably mediate the attachment of the 5S RNA into the large ribosomal subunit, where it forms part of the central protuberance. In the 70S ribosome it contacts protein S13 of the 30S subunit (bridge B1b), connecting the 2 subunits; this bridge is implicated in subunit movement. May contact the P site tRNA; the 5S rRNA and some of its associated proteins might help stabilize positioning of ribosome-bound tRNAs. The chain is Large ribosomal subunit protein uL5 from Methanoculleus marisnigri (strain ATCC 35101 / DSM 1498 / JR1).